The sequence spans 356 residues: Altered inheritance of mitochondria protein 23, mitochondrial (356 aa).

Residues 1–32 constitute a mitochondrion transit peptide; sequence MLKVPLSDVLSQKMLFLKSFRYFHCTKYFSRD.

It belongs to the AIM23 family.

Its subcellular location is the mitochondrion. This is Altered inheritance of mitochondria protein 23, mitochondrial (AIM23) from Saccharomyces cerevisiae (strain YJM789) (Baker's yeast).